Consider the following 674-residue polypeptide: DNA ligase (674 aa).

NAD(+) contacts are provided by residues 42 to 46 (DNVYD), 91 to 92 (SM), and Glu-121. Lys-123 (N6-AMP-lysine intermediate) is an active-site residue. NAD(+) contacts are provided by Arg-144, Glu-178, Lys-294, and Lys-318. Cys-412, Cys-415, Cys-430, and Cys-435 together coordinate Zn(2+). Positions 596 to 674 (VKDSFVAGKT…ETELLANLKD (79 aa)) constitute a BRCT domain.

The protein belongs to the NAD-dependent DNA ligase family. LigA subfamily. Mg(2+) is required as a cofactor. The cofactor is Mn(2+).

It carries out the reaction NAD(+) + (deoxyribonucleotide)n-3'-hydroxyl + 5'-phospho-(deoxyribonucleotide)m = (deoxyribonucleotide)n+m + AMP + beta-nicotinamide D-nucleotide.. DNA ligase that catalyzes the formation of phosphodiester linkages between 5'-phosphoryl and 3'-hydroxyl groups in double-stranded DNA using NAD as a coenzyme and as the energy source for the reaction. It is essential for DNA replication and repair of damaged DNA. The chain is DNA ligase from Lacticaseibacillus casei (strain BL23) (Lactobacillus casei).